We begin with the raw amino-acid sequence, 101 residues long: UPF0235 protein SG2030 (101 aa).

It belongs to the UPF0235 family.

This chain is UPF0235 protein SG2030, found in Sodalis glossinidius (strain morsitans).